An 89-amino-acid chain; its full sequence is Small ribosomal subunit protein uS15 (89 aa).

This sequence belongs to the universal ribosomal protein uS15 family. Part of the 30S ribosomal subunit. Forms a bridge to the 50S subunit in the 70S ribosome, contacting the 23S rRNA.

Its function is as follows. One of the primary rRNA binding proteins, it binds directly to 16S rRNA where it helps nucleate assembly of the platform of the 30S subunit by binding and bridging several RNA helices of the 16S rRNA. In terms of biological role, forms an intersubunit bridge (bridge B4) with the 23S rRNA of the 50S subunit in the ribosome. This is Small ribosomal subunit protein uS15 from Mycolicibacterium smegmatis (strain ATCC 700084 / mc(2)155) (Mycobacterium smegmatis).